Consider the following 495-residue polypeptide: Serine/threonine-protein phosphatase 2A regulatory subunit sur-6 (495 aa).

The tract at residues 1-27 (MVMEVDEPAVAATTSQNQPQEHANDFD) is disordered. Polar residues predominate over residues 12-21 (ATTSQNQPQE). 6 WD repeats span residues 64–103 (TEADVISCVEFSHDGEYLATGDKGGRVVIFQRDQSGKYVK), 130–171 (EIDE…RKIG), 215–253 (AHTYHVNSISVNSDQETFLSADDLRVNLWNLEITNESFN), 264–304 (ELTE…LCDA), 323–361 (EIIASVSDVKFSHNGRYLLTRDYLTVKVWDLNMESQPVE), and 378–419 (ENDS…DAKT). The tract at residues 439 to 459 (SAKRKRNNLSSSGETTEEDLS) is disordered. The WD 7 repeat unit spans residues 464–495 (QFDRKILHTAWHPKDNIIALAATNNLYIFSDV).

The protein belongs to the phosphatase 2A regulatory subunit B family. In terms of assembly, part of a complex consisting of a common heterodimeric core enzyme, composed of catalytic subunit let-92 and constant regulatory subunit paa-1, that associates with a variety of regulatory subunits which confer distinct properties to the holoenzyme. Interacts with let-92.

It is found in the cytoplasm. Functionally, probable regulatory subunit of serine/threonine phosphatase let-92. Together with let-92 and constant regulatory subunit paa-1, positively regulates centriole duplication during early embryonic cell divisions by preventing the degradation of sas-5 and kinase zyg-1. In addition, during vulva development, may play a role with phosphatase let-92 and regulatory subunit paa-1 in the induction of vulva cell precursors by positively regulating let-60/Ras-MAP kinase signaling, probably by promoting lin-45 activation. In intestinal epithelial cells, may play a role in the late secretory pathway probably by regulating the exocyst, a protein complex involved in targeting secretory vesicles to the plasma membrane. The sequence is that of Serine/threonine-protein phosphatase 2A regulatory subunit sur-6 from Caenorhabditis elegans.